Reading from the N-terminus, the 181-residue chain is ATP synthase subunit delta (181 aa).

It belongs to the ATPase delta chain family. As to quaternary structure, F-type ATPases have 2 components, F(1) - the catalytic core - and F(0) - the membrane proton channel. F(1) has five subunits: alpha(3), beta(3), gamma(1), delta(1), epsilon(1). F(0) has three main subunits: a(1), b(2) and c(10-14). The alpha and beta chains form an alternating ring which encloses part of the gamma chain. F(1) is attached to F(0) by a central stalk formed by the gamma and epsilon chains, while a peripheral stalk is formed by the delta and b chains.

The protein resides in the cell membrane. In terms of biological role, f(1)F(0) ATP synthase produces ATP from ADP in the presence of a proton or sodium gradient. F-type ATPases consist of two structural domains, F(1) containing the extramembraneous catalytic core and F(0) containing the membrane proton channel, linked together by a central stalk and a peripheral stalk. During catalysis, ATP synthesis in the catalytic domain of F(1) is coupled via a rotary mechanism of the central stalk subunits to proton translocation. This protein is part of the stalk that links CF(0) to CF(1). It either transmits conformational changes from CF(0) to CF(1) or is implicated in proton conduction. The chain is ATP synthase subunit delta from Desulforamulus reducens (strain ATCC BAA-1160 / DSM 100696 / MI-1) (Desulfotomaculum reducens).